Here is a 295-residue protein sequence, read N- to C-terminus: Small ribosomal subunit protein uS2 (295 aa).

S2 is modified (N-acetylserine). S43 is modified (phosphoserine). An N6-acetyllysine modification is found at K52. Residues T54–Q113 are interaction with PPP1R16B. K89 is subject to N6-acetyllysine; alternate. K89 participates in a covalent cross-link: Glycyl lysine isopeptide (Lys-Gly) (interchain with G-Cter in SUMO2); alternate. T97 carries the post-translational modification Phosphothreonine. 2 laminin-binding regions span residues I161 to R180 and R205 to G229. [DE]-W-[ST] repeat units follow at residues E230–T232, D247–S249, D266–S268, D275–S277, and E293–S295. The laminin-binding stretch occupies residues Q242–S295. Positions D266–S295 are disordered.

Belongs to the universal ribosomal protein uS2 family. Monomer (37LRP) and homodimer (67LR). Component of the small ribosomal subunit. Mature ribosomes consist of a small (40S) and a large (60S) subunit. The 40S subunit contains about 33 different proteins and 1 molecule of RNA (18S). The 60S subunit contains about 49 different proteins and 3 molecules of RNA (28S, 5.8S and 5S). Interacts with RPS21. Interacts with several laminins including at least LAMB1. Interacts with MDK. The mature dimeric form interacts with PPP1R16B (via its fourth ankyrin repeat). Interacts with PPP1CA only in the presence of PPP1R16B. Post-translationally, acylated. Acylation may be a prerequisite for conversion of the monomeric 37 kDa laminin receptor precursor (37LRP) to the mature dimeric 67 kDa laminin receptor (67LR), and may provide a mechanism for membrane association. Cleaved by stromelysin-3 (ST3) at the cell surface. Cleavage by stromelysin-3 may be a mechanism to alter cell-extracellular matrix interactions. In terms of tissue distribution, expressed in most neurons and in a subset of glial cells. The overall distribution of LR correlates with that reported for laminin-1 but also with brain regions classically associated with prion-related neurodegeneration.

The protein localises to the cell membrane. The protein resides in the cytoplasm. It is found in the nucleus. In terms of biological role, required for the assembly and/or stability of the 40S ribosomal subunit. Required for the processing of the 20S rRNA-precursor to mature 18S rRNA in a late step of the maturation of 40S ribosomal subunits. Also functions as a cell surface receptor for laminin. Plays a role in cell adhesion to the basement membrane and in the consequent activation of signaling transduction pathways. May play a role in cell fate determination and tissue morphogenesis. Also acts as a receptor for several other ligands, including the pathogenic prion protein, viruses, and bacteria. Acts as a PPP1R16B-dependent substrate of PPP1CA. This is Small ribosomal subunit protein uS2 (Rpsa) from Rattus norvegicus (Rat).